We begin with the raw amino-acid sequence, 191 residues long: Dephospho-CoA kinase (191 aa).

The DPCK domain occupies 3 to 191 (AIGITGSYAS…KLIKNLECQV (189 aa)). 11–16 (ASGKTF) is an ATP binding site.

Belongs to the CoaE family.

The protein resides in the cytoplasm. It carries out the reaction 3'-dephospho-CoA + ATP = ADP + CoA + H(+). It functions in the pathway cofactor biosynthesis; coenzyme A biosynthesis; CoA from (R)-pantothenate: step 5/5. Catalyzes the phosphorylation of the 3'-hydroxyl group of dephosphocoenzyme A to form coenzyme A. The sequence is that of Dephospho-CoA kinase from Rickettsia typhi (strain ATCC VR-144 / Wilmington).